A 174-amino-acid polypeptide reads, in one-letter code: Peptide methionine sulfoxide reductase MsrA (174 aa).

Cys-11 is a catalytic residue.

This sequence belongs to the MsrA Met sulfoxide reductase family.

It carries out the reaction L-methionyl-[protein] + [thioredoxin]-disulfide + H2O = L-methionyl-(S)-S-oxide-[protein] + [thioredoxin]-dithiol. It catalyses the reaction [thioredoxin]-disulfide + L-methionine + H2O = L-methionine (S)-S-oxide + [thioredoxin]-dithiol. Has an important function as a repair enzyme for proteins that have been inactivated by oxidation. Catalyzes the reversible oxidation-reduction of methionine sulfoxide in proteins to methionine. The chain is Peptide methionine sulfoxide reductase MsrA from Haloquadratum walsbyi (strain DSM 16790 / HBSQ001).